The primary structure comprises 399 residues: Glutathione S-transferase LANCL1 (399 aa).

Residue A2 is modified to N-acetylalanine. At K142 the chain carries N6-acetyllysine. C276 provides a ligand contact to Zn(2+). K317 contacts glutathione. Residues C322 and H323 each contribute to the Zn(2+) site. Residue 364–367 (RTPD) coordinates glutathione.

Belongs to the LanC-like protein family. Interacts with the C-terminal of STOM. Interacts with the EPS8 SH3 domain. Interaction with EPS8 is inhibited by glutathione binding. In terms of tissue distribution, expressed in brain.

It is found in the cytoplasm. The protein localises to the cell membrane. It catalyses the reaction RX + glutathione = an S-substituted glutathione + a halide anion + H(+). The catalysed reaction is 1-chloro-2,4-dinitrobenzene + glutathione = 2,4-dinitrophenyl-S-glutathione + chloride + H(+). Functions as a glutathione transferase. Catalyzes conjugation of the glutathione (GSH) to artificial substrates 1-chloro-2,4-dinitrobenzene (CDNB) and p-nitrophenyl acetate. Mitigates neuronal oxidative stress during normal postnatal development and in response to oxidative stresses probably through GSH antioxidant defense mechanism. May play a role in EPS8 signaling. Binds glutathione. In Bos taurus (Bovine), this protein is Glutathione S-transferase LANCL1 (LANCL1).